The primary structure comprises 271 residues: MMQRYAVGIEFCGIRYRGWQTQQAGVPSIQETIEKVLSKIADEPIILHGAGRTDAGVHATNMVAHFDTNAIRPQRGWLMGANSQLPKDISIQWIKEMNTDFHARFKATARRYRYVVYNTLNRPALLHKQVTHVYQTLDVDKMMLAARKFEGTHNFETFRAASCQSSQPVRHLSHCRLTRHGRYLVLDIQADGFLHHMVRNIMGCLLEIGQGCYEIEHIDTMFAAQDRKAAGVTAPADGLYFIQAYYPEHFELPQHPLGPHWLNLPDEIPNI.

The Nucleophile role is filled by aspartate 54. Tyrosine 112 is a binding site for substrate.

Belongs to the tRNA pseudouridine synthase TruA family. Homodimer.

It carries out the reaction uridine(38/39/40) in tRNA = pseudouridine(38/39/40) in tRNA. Functionally, formation of pseudouridine at positions 38, 39 and 40 in the anticodon stem and loop of transfer RNAs. In Acinetobacter baylyi (strain ATCC 33305 / BD413 / ADP1), this protein is tRNA pseudouridine synthase A.